Reading from the N-terminus, the 383-residue chain is Probable arabinan endo-1,5-alpha-L-arabinosidase D (383 aa).

Residues 1–22 (MVHITLPGLLLCLCLYLSVAPA) form the signal peptide. Catalysis depends on Asp-49, which acts as the Proton acceptor. Asn-75, Asn-163, and Asn-206 each carry an N-linked (GlcNAc...) asparagine glycan. The active-site Proton donor is Glu-227. Asn-325 is a glycosylation site (N-linked (GlcNAc...) asparagine). Asn-356 carries the GPI-anchor amidated asparagine lipid modification. Positions 357–383 (PGNSLQPPSSVSLQIVAFLCLVILFTL) are cleaved as a propeptide — removed in mature form.

Belongs to the glycosyl hydrolase 43 family.

The protein resides in the cell membrane. It catalyses the reaction Endohydrolysis of (1-&gt;5)-alpha-arabinofuranosidic linkages in (1-&gt;5)-arabinans.. It functions in the pathway glycan metabolism; L-arabinan degradation. Endo-1,5-alpha-L-arabinanase involved in degradation of pectin. Its preferred substrate is linear 1,5-alpha-L-arabinan. The chain is Probable arabinan endo-1,5-alpha-L-arabinosidase D (abnD) from Emericella nidulans (strain FGSC A4 / ATCC 38163 / CBS 112.46 / NRRL 194 / M139) (Aspergillus nidulans).